The sequence spans 517 residues: BTB/POZ domain-containing protein At3g49900 (517 aa).

Positions 28-37 (SSSSSSLSLS) are enriched in low complexity. Positions 28–49 (SSSSSSLSLSPKQPINLSSSPS) are disordered. Residues 38 to 49 (PKQPINLSSSPS) are compositionally biased toward polar residues. In terms of domain architecture, BTB spans 67-130 (PDVFVNVGGT…CYGAHIELTP (64 aa)). In terms of domain architecture, NPH3 spans 224–307 (LPAGDFNVVA…VRAMLQEQLN (84 aa)). Positions 409-456 (ARSASFHCVHQPSNVNKTQRGDRGSVSNLSTTYRRRRASPPQAQPQKS) are disordered.

Belongs to the NPH3 family.

Its pathway is protein modification; protein ubiquitination. May act as a substrate-specific adapter of an E3 ubiquitin-protein ligase complex (CUL3-RBX1-BTB) which mediates the ubiquitination and subsequent proteasomal degradation of target proteins. This chain is BTB/POZ domain-containing protein At3g49900, found in Arabidopsis thaliana (Mouse-ear cress).